Consider the following 3390-residue polypeptide: Genome polyprotein (3390 aa).

The interaction with host EXOC1 stretch occupies residues 1–15 (MNNQRKKTGKPSINM). Residues 1–100 (MNNQRKKTGK…MLSIINKRKK (100 aa)) are Cytoplasmic-facing. Positions 37-72 (LLNGQGPMKLVMAFIAFLRFLAIPPTAGVLARWGTF) are hydrophobic; homodimerization of capsid protein C. Positions 101 to 114 (TSLCLMMMLPATLA) are cleaved as a propeptide — ER anchor for the capsid protein C, removed in mature form by serine protease NS3. The helical transmembrane segment at 101-118 (TSLCLMMMLPATLAFHLT) threads the bilayer. Residues 119–243 (SRDGEPRMIV…VEKVETWALR (125 aa)) lie on the Extracellular side of the membrane. Asparagine 183 carries an N-linked (GlcNAc...) asparagine; by host glycan. Residues 244–264 (HPGFTILALFLAHYIGTSLTQ) traverse the membrane as a helical segment. Lysine 265 is a topological domain (cytoplasmic). Residues 266–280 (VVIFILLMLVTPSMT) form a helical membrane-spanning segment. The Extracellular portion of the chain corresponds to 281 to 723 (MRCVGVGNRD…VHQIFGSAYT (443 aa)). 4 disulfide bridges follow: cysteine 283/cysteine 310, cysteine 340/cysteine 401, cysteine 354/cysteine 385, and cysteine 372/cysteine 396. An N-linked (GlcNAc...) asparagine; by host glycan is attached at asparagine 347. Residues 378 to 391 (DRGWGNGCGLFGKG) are fusion peptide. An N-linked (GlcNAc...) asparagine; by host glycan is attached at asparagine 433. 2 disulfide bridges follow: cysteine 463–cysteine 563 and cysteine 580–cysteine 611. The helical transmembrane segment at 724-744 (ALFSGVSWIMKIGIGVLLTWI) threads the bilayer. The Cytoplasmic portion of the chain corresponds to 745–750 (GLNSKN). A helical transmembrane segment spans residues 751 to 771 (TSMSFSCIAIGIITLYLGVVV). Residues 772-1193 (QADMGCVINW…MIGSNASDRM (422 aa)) lie on the Extracellular side of the membrane. Disulfide bonds link cysteine 777–cysteine 788, cysteine 828–cysteine 916, cysteine 952–cysteine 996, cysteine 1053–cysteine 1102, cysteine 1064–cysteine 1086, and cysteine 1085–cysteine 1089. N-linked (GlcNAc...) asparagine; by host glycans are attached at residues asparagine 903 and asparagine 980. Asparagine 1132 and asparagine 1188 each carry an N-linked (GlcNAc...) asparagine; by host glycan. Residues 1194–1218 (GMGVTYLALIATFKIQPFLALGFFL) traverse the membrane as a helical segment. The Cytoplasmic segment spans residues 1219-1224 (RKLTSR). A helical membrane pass occupies residues 1225–1243 (ENLLLGVGLAMAATLRLPE). At 1244-1267 (DIEQMANGIALGLMALKLITQFET) the chain is on the lumenal side. A helical transmembrane segment spans residues 1268–1288 (YQLWTALVSLTCSNTIFTLTV). Residue alanine 1289 is a topological domain, cytoplasmic. The chain crosses the membrane as a helical span at residues 1290 to 1308 (WRTATLILAGISLLPVCQS). Residues 1309 to 1315 (SSMRKTD) lie on the Lumenal side of the membrane. A helical transmembrane segment spans residues 1316 to 1336 (WLPMTVAAMGVPPLPLFIFSL). Residues 1337 to 1344 (KDTLKRRS) are Cytoplasmic-facing. Residues 1345–1365 (WPLNEGVMAVGLVSILASSLL) traverse the membrane as a helical segment. At 1366 to 1368 (RND) the chain is on the lumenal side. Residues 1369–1389 (VPMAGPLVAGGLLIACYVITG) traverse the membrane as a helical segment. Topologically, residues 1390–1443 (TSADLTVEKAADVTWEEEAEQTGVSHNLMITVDDDGTMRIKDDETENILTVLLK) are cytoplasmic. Residues 1396 to 1435 (VEKAADVTWEEEAEQTGVSHNLMITVDDDGTMRIKDDETE) form an interacts with and activates NS3 protease region. Positions 1444-1464 (TALLIVSGIFPCSIPATLLVW) form an intramembrane region, helical. Residues 1465-2146 (HTWQKQTQRS…VEELPETMET (682 aa)) lie on the Cytoplasmic side of the membrane. Residues 1474-1651 (SGVLWDVPSP…NAEPDGPTPE (178 aa)) form the Peptidase S7 domain. Residues histidine 1524, aspartate 1548, and serine 1608 each act as charge relay system; for serine protease NS3 activity in the active site. In terms of domain architecture, Helicase ATP-binding spans 1654–1810 (EEMFKKRNLT…QSNAPIQDEE (157 aa)). The tract at residues 1658-1661 (KKRN) is important for RNA-binding. 1667–1674 (LHPGSGKT) is an ATP binding site. The DEAH box motif lies at 1758-1761 (DEAH). The region spanning 1821–1986 (GNEWITDFVG…GIIPALFEPE (166 aa)) is the Helicase C-terminal domain. An N6-acetyllysine; by host modification is found at lysine 1862. The helical transmembrane segment at 2147–2167 (LLLLGLMILLTGGAMLFLISG) threads the bilayer. At 2168-2169 (KG) the chain is on the lumenal side. The helical intramembrane region spans 2170–2190 (IGKTSIGLICVIASSGMLWMA). Aspartate 2191 is a topological domain (lumenal). A helical membrane pass occupies residues 2192 to 2212 (VPLQWIASAIVLEFFMMVLLI). At 2213 to 2227 (PEPEKQRTPQDNQLA) the chain is on the cytoplasmic side. A helical transmembrane segment spans residues 2228–2248 (YVVIGILTLAAIVAANEMGLL). Residues 2249–2273 (ETTKRDLGMSKEPGVVSPTSYLDVD) lie on the Lumenal side of the membrane. Positions 2274 to 2294 (LHPASAWTLYAVATTVITPML) form an intramembrane region, helical. The Lumenal portion of the chain corresponds to 2295–2305 (RHTIENSTANV). 2 N-linked (GlcNAc...) asparagine; by host glycosylation sites follow: asparagine 2300 and asparagine 2304. The segment at residues 2306 to 2326 (SLAAIANQAVVLMGLDKGWPI) is an intramembrane region (helical). Residues 2327-2346 (SKMDLGVPLLALGCYSQVNP) lie on the Lumenal side of the membrane. The chain crosses the membrane as a helical span at residues 2347–2367 (LTLIAAVLLLVTHYAIIGPGL). Over 2368–2412 (QAKATREAQKRTAAGIMKNPTVDGIMTIDLDPVIYDSKFEKQLGQ) the chain is Cytoplasmic. A helical membrane pass occupies residues 2413–2433 (VMLLVLCAVQLLLMRTSWALC). The Lumenal segment spans residues 2434–2458 (EVLTLATGPITTLWEGSPGKFWNTT). Asparagine 2456 is a glycosylation site (N-linked (GlcNAc...) asparagine; by host). A helical membrane pass occupies residues 2459–2479 (IAVSMANIFRGSYLAGAGLAF). The Cytoplasmic segment spans residues 2480-3390 (SIMKSVGTGK…KEEESEGAIW (911 aa)). Residues 2492-2753 (TGSQGETLGE…DVDLGAGTRH (262 aa)) enclose the mRNA cap 0-1 NS5-type MT domain. Serine 2546 serves as a coordination point for S-adenosyl-L-methionine. At serine 2546 the chain carries Phosphoserine. Catalysis depends on lysine 2551, which acts as the For 2'-O-MTase activity. An SUMO-interacting motif motif is present at residues 2567-2570 (VIDL). S-adenosyl-L-methionine-binding residues include glycine 2576, tryptophan 2577, threonine 2594, lysine 2595, aspartate 2621, and valine 2622. Aspartate 2636 (for 2'-O-MTase activity) is an active-site residue. Residue isoleucine 2637 coordinates S-adenosyl-L-methionine. Active-site for 2'-O-MTase activity residues include lysine 2670 and glutamate 2706. Tyrosine 2708 is a binding site for S-adenosyl-L-methionine. Zn(2+) contacts are provided by glutamate 2927, histidine 2931, cysteine 2936, and cysteine 2939. In terms of domain architecture, RdRp catalytic spans 3018–3168 (AMYADDTAGW…PIDDRFANAL (151 aa)). 3 residues coordinate Zn(2+): histidine 3202, cysteine 3218, and cysteine 3337.

It in the N-terminal section; belongs to the class I-like SAM-binding methyltransferase superfamily. mRNA cap 0-1 NS5-type methyltransferase family. Homodimer. Interacts (via N-terminus) with host EXOC1 (via C-terminus); this interaction results in EXOC1 degradation through the proteasome degradation pathway. As to quaternary structure, forms heterodimers with envelope protein E in the endoplasmic reticulum and Golgi. In terms of assembly, homodimer; in the endoplasmic reticulum and Golgi. Interacts with protein prM. Interacts with non-structural protein 1. Homodimer; Homohexamer when secreted. Interacts with envelope protein E. As to quaternary structure, interacts (via N-terminus) with serine protease NS3. In terms of assembly, forms a heterodimer with serine protease NS3. May form homooligomers. Forms a heterodimer with NS2B. Interacts with NS4B. Interacts with unphosphorylated RNA-directed RNA polymerase NS5; this interaction stimulates RNA-directed RNA polymerase NS5 guanylyltransferase activity. As to quaternary structure, interacts with host MAVS; this interaction inhibits the synthesis of IFN-beta. Interacts with host AUP1; the interaction occurs in the presence of Dengue virus NS4B and induces lipophagy which facilitates production of virus progeny particles. In terms of assembly, interacts with serine protease NS3. Homodimer. Interacts with host STAT2; this interaction inhibits the phosphorylation of the latter, and, when all viral proteins are present (polyprotein), targets STAT2 for degradation. Interacts with serine protease NS3. Post-translationally, specific enzymatic cleavages in vivo yield mature proteins. Cleavages in the lumen of endoplasmic reticulum are performed by host signal peptidase, whereas cleavages in the cytoplasmic side are performed by serine protease NS3. Signal cleavage at the 2K-4B site requires a prior NS3 protease-mediated cleavage at the 4A-2K site. Cleaved in post-Golgi vesicles by a host furin, releasing the mature small envelope protein M, and peptide pr. This cleavage is incomplete as up to 30% of viral particles still carry uncleaved prM. In terms of processing, N-glycosylated. Post-translationally, N-glycosylated. The excreted form is glycosylated and this is required for efficient secretion of the protein from infected cells. Acetylated by host KAT5. Acetylation modulates NS3 RNA-binding and unwinding activities and plays an important positive role for viral replication. In terms of processing, sumoylation of RNA-directed RNA polymerase NS5 increases NS5 protein stability allowing proper viral RNA replication. Post-translationally, phosphorylated on serines residues. This phosphorylation may trigger NS5 nuclear localization.

It localises to the virion. Its subcellular location is the host nucleus. The protein resides in the host cytoplasm. The protein localises to the host perinuclear region. It is found in the secreted. It localises to the virion membrane. Its subcellular location is the host endoplasmic reticulum membrane. The protein resides in the host mitochondrion. It carries out the reaction Selective hydrolysis of -Xaa-Xaa-|-Yaa- bonds in which each of the Xaa can be either Arg or Lys and Yaa can be either Ser or Ala.. The catalysed reaction is RNA(n) + a ribonucleoside 5'-triphosphate = RNA(n+1) + diphosphate. The enzyme catalyses a ribonucleoside 5'-triphosphate + H2O = a ribonucleoside 5'-diphosphate + phosphate + H(+). It catalyses the reaction ATP + H2O = ADP + phosphate + H(+). It carries out the reaction a 5'-end (5'-triphosphoguanosine)-ribonucleoside in mRNA + S-adenosyl-L-methionine = a 5'-end (N(7)-methyl 5'-triphosphoguanosine)-ribonucleoside in mRNA + S-adenosyl-L-homocysteine. The catalysed reaction is a 5'-end (N(7)-methyl 5'-triphosphoguanosine)-ribonucleoside in mRNA + S-adenosyl-L-methionine = a 5'-end (N(7)-methyl 5'-triphosphoguanosine)-(2'-O-methyl-ribonucleoside) in mRNA + S-adenosyl-L-homocysteine + H(+). Its function is as follows. Plays a role in virus budding by binding to the cell membrane and gathering the viral RNA into a nucleocapsid that forms the core of a mature virus particle. During virus entry, may induce genome penetration into the host cytoplasm after hemifusion induced by the surface proteins. Can migrate to the cell nucleus where it modulates host functions. Overcomes the anti-viral effects of host EXOC1 by sequestering and degrading the latter through the proteasome degradation pathway. Functionally, inhibits RNA silencing by interfering with host Dicer. Prevents premature fusion activity of envelope proteins in trans-Golgi by binding to envelope protein E at pH6.0. After virion release in extracellular space, gets dissociated from E dimers. In terms of biological role, acts as a chaperone for envelope protein E during intracellular virion assembly by masking and inactivating envelope protein E fusion peptide. prM is the only viral peptide matured by host furin in the trans-Golgi network probably to avoid catastrophic activation of the viral fusion activity in acidic Golgi compartment prior to virion release. prM-E cleavage is inefficient, and many virions are only partially matured. These uncleaved prM would play a role in immune evasion. Its function is as follows. May play a role in virus budding. Exerts cytotoxic effects by activating a mitochondrial apoptotic pathway through M ectodomain. May display a viroporin activity. Functionally, binds to host cell surface receptor and mediates fusion between viral and cellular membranes. Envelope protein is synthesized in the endoplasmic reticulum in the form of heterodimer with protein prM. They play a role in virion budding in the ER, and the newly formed immature particle is covered with 60 spikes composed of heterodimer between precursor prM and envelope protein E. The virion is transported to the Golgi apparatus where the low pH causes dissociation of PrM-E heterodimers and formation of E homodimers. prM-E cleavage is inefficient, and many virions are only partially matured. These uncleaved prM would play a role in immune evasion. Involved in immune evasion, pathogenesis and viral replication. Once cleaved off the polyprotein, is targeted to three destinations: the viral replication cycle, the plasma membrane and the extracellular compartment. Essential for viral replication. Required for formation of the replication complex and recruitment of other non-structural proteins to the ER-derived membrane structures. Excreted as a hexameric lipoparticle that plays a role against host immune response. Antagonizing the complement function. Binds to the host macrophages and dendritic cells. Inhibits signal transduction originating from Toll-like receptor 3 (TLR3). In terms of biological role, disrupts the host endothelial glycocalyx layer of host pulmonary microvascular endothelial cells, inducing degradation of sialic acid and shedding of heparan sulfate proteoglycans. NS1 induces expression of sialidases, heparanase, and activates cathepsin L, which activates heparanase via enzymatic cleavage. These effects are probably linked to the endothelial hyperpermeability observed in severe dengue disease. Its function is as follows. Component of the viral RNA replication complex that functions in virion assembly and antagonizes the host immune response. Functionally, required cofactor for the serine protease function of NS3. May have membrane-destabilizing activity and form viroporins. Displays three enzymatic activities: serine protease, NTPase and RNA helicase. NS3 serine protease, in association with NS2B, performs its autocleavage and cleaves the polyprotein at dibasic sites in the cytoplasm: C-prM, NS2A-NS2B, NS2B-NS3, NS3-NS4A, NS4A-2K and NS4B-NS5. NS3 RNA helicase binds RNA and unwinds dsRNA in the 3' to 5' direction. In terms of biological role, regulates the ATPase activity of the NS3 helicase activity. NS4A allows NS3 helicase to conserve energy during unwinding. Plays a role in the inhibition of the host innate immune response. Interacts with host MAVS and thereby prevents the interaction between RIGI and MAVS. In turn, IFN-beta production is impaired. Interacts with host AUP1 which mediates induction of lipophagy in host cells and facilitates production of virus progeny particles. Its function is as follows. Functions as a signal peptide for NS4B and is required for the interferon antagonism activity of the latter. Functionally, induces the formation of ER-derived membrane vesicles where the viral replication takes place. Inhibits interferon (IFN)-induced host STAT1 phosphorylation and nuclear translocation, thereby preventing the establishment of cellular antiviral state by blocking the IFN-alpha/beta pathway. Replicates the viral (+) and (-) RNA genome, and performs the capping of genomes in the cytoplasm. NS5 methylates viral RNA cap at guanine N-7 and ribose 2'-O positions. Besides its role in RNA genome replication, also prevents the establishment of cellular antiviral state by blocking the interferon-alpha/beta (IFN-alpha/beta) signaling pathway. Inhibits host TYK2 and STAT2 phosphorylation, thereby preventing activation of JAK-STAT signaling pathway. The polypeptide is Genome polyprotein (Dengue virus type 3 (strain China/80-2/1980) (DENV-3)).